We begin with the raw amino-acid sequence, 143 residues long: Large ribosomal subunit protein uL11 (143 aa).

Belongs to the universal ribosomal protein uL11 family. Part of the ribosomal stalk of the 50S ribosomal subunit. Interacts with L10 and the large rRNA to form the base of the stalk. L10 forms an elongated spine to which L12 dimers bind in a sequential fashion forming a multimeric L10(L12)X complex. One or more lysine residues are methylated.

Functionally, forms part of the ribosomal stalk which helps the ribosome interact with GTP-bound translation factors. In Rhizobium rhizogenes (strain K84 / ATCC BAA-868) (Agrobacterium radiobacter), this protein is Large ribosomal subunit protein uL11.